Here is a 160-residue protein sequence, read N- to C-terminus: Ribosomal RNA large subunit methyltransferase H (160 aa).

2 residues coordinate S-adenosyl-L-methionine: Leu-76 and Gly-108.

The protein belongs to the RNA methyltransferase RlmH family. Homodimer.

It is found in the cytoplasm. The enzyme catalyses pseudouridine(1915) in 23S rRNA + S-adenosyl-L-methionine = N(3)-methylpseudouridine(1915) in 23S rRNA + S-adenosyl-L-homocysteine + H(+). Functionally, specifically methylates the pseudouridine at position 1915 (m3Psi1915) in 23S rRNA. This Rhodopseudomonas palustris (strain HaA2) protein is Ribosomal RNA large subunit methyltransferase H.